Consider the following 365-residue polypeptide: Anhydro-N-acetylmuramic acid kinase (365 aa).

ATP is bound at residue 9–16 (GTSLDGVD).

This sequence belongs to the anhydro-N-acetylmuramic acid kinase family.

The catalysed reaction is 1,6-anhydro-N-acetyl-beta-muramate + ATP + H2O = N-acetyl-D-muramate 6-phosphate + ADP + H(+). It functions in the pathway amino-sugar metabolism; 1,6-anhydro-N-acetylmuramate degradation. Its pathway is cell wall biogenesis; peptidoglycan recycling. Its function is as follows. Catalyzes the specific phosphorylation of 1,6-anhydro-N-acetylmuramic acid (anhMurNAc) with the simultaneous cleavage of the 1,6-anhydro ring, generating MurNAc-6-P. Is required for the utilization of anhMurNAc either imported from the medium or derived from its own cell wall murein, and thus plays a role in cell wall recycling. The protein is Anhydro-N-acetylmuramic acid kinase of Zymomonas mobilis subsp. mobilis (strain ATCC 31821 / ZM4 / CP4).